A 168-amino-acid chain; its full sequence is Large ribosomal subunit protein bL9 (168 aa).

The segment at 148 to 168 (ENGEGSVQPAAEAAEVASTEA) is disordered. Positions 157 to 168 (AAEAAEVASTEA) are enriched in low complexity.

Belongs to the bacterial ribosomal protein bL9 family.

In terms of biological role, binds to the 23S rRNA. In Herpetosiphon aurantiacus (strain ATCC 23779 / DSM 785 / 114-95), this protein is Large ribosomal subunit protein bL9.